Here is a 129-residue protein sequence, read N- to C-terminus: Small ribosomal subunit protein uS11 (129 aa).

This sequence belongs to the universal ribosomal protein uS11 family. As to quaternary structure, part of the 30S ribosomal subunit. Interacts with proteins S7 and S18. Binds to IF-3.

Located on the platform of the 30S subunit, it bridges several disparate RNA helices of the 16S rRNA. Forms part of the Shine-Dalgarno cleft in the 70S ribosome. The chain is Small ribosomal subunit protein uS11 from Nitrosospira multiformis (strain ATCC 25196 / NCIMB 11849 / C 71).